Reading from the N-terminus, the 461-residue chain is Toxin CfTX-B (461 aa).

The signal sequence occupies residues 1–24 (MDPRISSRLRALALLVFVISITDG). Residues 25–31 (IPNRAKR) constitute a propeptide that is removed on maturation.

It belongs to the jellyfish toxin family. Type II subfamily. As to quaternary structure, oligomer. Contains 2 disulfide bonds. In terms of tissue distribution, nematocytes.

Its subcellular location is the secreted. It localises to the nematocyst. The protein localises to the target cell membrane. Functionally, the fraction containing this toxin and CfTX-B shows potent hemolytic activity. This fraction causes minor effects on the cardiovascular system of anesthetized rats (at 25 ug/kg), since it has no significant effects on heart rate but produces relatively small increases in mean arterial pressure. The sequence is that of Toxin CfTX-B from Chironex fleckeri (Australian box jellyfish).